The following is a 138-amino-acid chain: Augmin complex subunit msd1 (138 aa).

As to quaternary structure, component of the augmin complex composed of dgt2, dgt3, dgt4, dgt5, dgt6, msd1, msd5 and wac. The complex interacts directly or indirectly with microtubules and is required for centrosome-independent generation of spindle microtubules.

The protein resides in the cytoplasm. It localises to the cytoskeleton. It is found in the spindle. In terms of biological role, as part of the augmin complex, plays a role in centrosome-independent generation of spindle microtubules. The complex is required for mitotic spindle assembly through its involvement in localizing gamma-tubulin to spindle microtubules. msd1 is required for microtubule nucleation from within the mitotic spindle and for localization of Grip71 to centrosomes and mitotic spindle. This chain is Augmin complex subunit msd1, found in Drosophila melanogaster (Fruit fly).